The primary structure comprises 585 residues: Auxin response factor 17 (585 aa).

The segment at residues 119-221 is a DNA-binding region (TF-B3); that stretch reads FAKILTPSDA…EMFIGVRRTP (103 aa). Disordered regions lie at residues 483 to 517 and 535 to 585; these read EMMN…RGPL and EHSE…SSQG. A compositionally biased stretch (low complexity) spans 488-510; sequence GSPPSDNLSPNSNTTNLSSGNDL. A compositionally biased stretch (polar residues) spans 573–585; that stretch reads KHSNSNAGSSSQG.

The protein belongs to the ARF family. As to quaternary structure, homo and heterodimers.

It is found in the nucleus. Auxin response factors (ARFs) are transcriptional factors that bind specifically to the DNA sequence 5'-TGTCTC-3' found in the auxin-responsive promoter elements (AuxREs). Could act as transcriptional activator or repressor. Formation of heterodimers with Aux/IAA proteins may alter their ability to modulate early auxin response genes expression. The sequence is that of Auxin response factor 17 (ARF17) from Arabidopsis thaliana (Mouse-ear cress).